A 419-amino-acid polypeptide reads, in one-letter code: MRKIVINGGLPLQGEITISGAKNSVVALIPAIILADDVVTLDCVPDISDVASLVEIMELMGATVKRYDDVLEIDPRGVQNIPMPYGKINSLRASYYFYGSLLGRFGEATVGLPGGCDLGPRPIDLHLKAFEAMGATASYEGDNMKLSAKDTGLHGASIYMDTVSVGATINTMIAAVKANGRTIIENAAREPEIIDVATLLNNMGAHIRGAGTNIIIIDGVERLHGTRHQVIPDRIEAGTYISLAAAVGKGIRINNVLYEHLEGFVAKLEEMGVRMTVSEDSIFVEEQSNLKAINIKTAPYPGFATDLQQPLTPLLLRANGRGTIVDTIYEKRVNHVFELAKMDADISTTNGHILYTGGRDLRGASVKATDLRAGAALVIAGLMAEGKTEITNIEFILRGYSDIIEKLRNLGADIRLVED.

Residue 22–23 coordinates phosphoenolpyruvate; that stretch reads KN. R92 contributes to the UDP-N-acetyl-alpha-D-glucosamine binding site. C116 (proton donor) is an active-site residue. C116 bears the 2-(S-cysteinyl)pyruvic acid O-phosphothioketal mark. UDP-N-acetyl-alpha-D-glucosamine contacts are provided by residues 121–125, D306, and I328; that span reads RPIDL.

It belongs to the EPSP synthase family. MurA subfamily.

It localises to the cytoplasm. The enzyme catalyses phosphoenolpyruvate + UDP-N-acetyl-alpha-D-glucosamine = UDP-N-acetyl-3-O-(1-carboxyvinyl)-alpha-D-glucosamine + phosphate. The protein operates within cell wall biogenesis; peptidoglycan biosynthesis. Its function is as follows. Cell wall formation. Adds enolpyruvyl to UDP-N-acetylglucosamine. The polypeptide is UDP-N-acetylglucosamine 1-carboxyvinyltransferase 2 (Streptococcus pneumoniae (strain ATCC BAA-255 / R6)).